A 1188-amino-acid polypeptide reads, in one-letter code: DNA-directed RNA polymerase subunit beta (1188 aa).

This sequence belongs to the RNA polymerase beta chain family. The RNAP catalytic core consists of 2 alpha, 1 beta, 1 beta' and 1 omega subunit. When a sigma factor is associated with the core the holoenzyme is formed, which can initiate transcription.

It carries out the reaction RNA(n) + a ribonucleoside 5'-triphosphate = RNA(n+1) + diphosphate. In terms of biological role, DNA-dependent RNA polymerase catalyzes the transcription of DNA into RNA using the four ribonucleoside triphosphates as substrates. This Streptococcus pyogenes serotype M1 protein is DNA-directed RNA polymerase subunit beta.